A 110-amino-acid polypeptide reads, in one-letter code: tRNA-binding protein YgjH (110 aa).

The region spanning 8–110 (DFARLEMRVG…RMMPAGVRVV (103 aa)) is the tRNA-binding domain.

Homodimer.

The protein is tRNA-binding protein YgjH (ygjH) of Escherichia coli (strain K12).